Here is a 375-residue protein sequence, read N- to C-terminus: Succinyl-diaminopimelate desuccinylase (375 aa).

Zn(2+) is bound at residue His-66. Asp-68 is an active-site residue. Residue Asp-99 coordinates Zn(2+). Catalysis depends on Glu-133, which acts as the Proton acceptor. Zn(2+) contacts are provided by Glu-134, Glu-162, and His-348.

It belongs to the peptidase M20A family. DapE subfamily. Homodimer. The cofactor is Zn(2+). Co(2+) is required as a cofactor.

The catalysed reaction is N-succinyl-(2S,6S)-2,6-diaminopimelate + H2O = (2S,6S)-2,6-diaminopimelate + succinate. It functions in the pathway amino-acid biosynthesis; L-lysine biosynthesis via DAP pathway; LL-2,6-diaminopimelate from (S)-tetrahydrodipicolinate (succinylase route): step 3/3. Catalyzes the hydrolysis of N-succinyl-L,L-diaminopimelic acid (SDAP), forming succinate and LL-2,6-diaminopimelate (DAP), an intermediate involved in the bacterial biosynthesis of lysine and meso-diaminopimelic acid, an essential component of bacterial cell walls. The protein is Succinyl-diaminopimelate desuccinylase of Escherichia coli (strain SE11).